The chain runs to 248 residues: Cytochrome c oxidase subunit 2 (248 aa).

Topologically, residues 1 to 39 (MMKELLMNNMLNDVPTPWAMYFQDSATPNMEGIMELHNN) are mitochondrial intermembrane. The chain crosses the membrane as a helical span at residues 40–56 (VVFYLIIMLCFVTYMLY). The Mitochondrial matrix segment spans residues 57–87 (NISTVYNKSAVAYKYMNHGQFIEMVWTTFPA). The chain crosses the membrane as a helical span at residues 88–104 (VMLLIMAFPSFMLLYIC). Topologically, residues 105 to 248 (DEVMAPAMTI…ADFLTWIDEQ (144 aa)) are mitochondrial intermembrane. Residues His-183, Cys-218, Glu-220, Cys-222, His-226, and Met-229 each contribute to the Cu cation site. Glu-220 lines the Mg(2+) pocket.

The protein belongs to the cytochrome c oxidase subunit 2 family. In terms of assembly, component of the cytochrome c oxidase (complex IV, CIV), a multisubunit enzyme composed of a catalytic core of 3 subunits and several supernumerary subunits. The complex exists as a monomer or a dimer and forms supercomplexes (SCs) in the inner mitochondrial membrane with ubiquinol-cytochrome c oxidoreductase (cytochrome b-c1 complex, complex III, CIII). It depends on Cu cation as a cofactor.

The protein localises to the mitochondrion inner membrane. It catalyses the reaction 4 Fe(II)-[cytochrome c] + O2 + 8 H(+)(in) = 4 Fe(III)-[cytochrome c] + 2 H2O + 4 H(+)(out). Functionally, component of the cytochrome c oxidase, the last enzyme in the mitochondrial electron transport chain which drives oxidative phosphorylation. The respiratory chain contains 3 multisubunit complexes succinate dehydrogenase (complex II, CII), ubiquinol-cytochrome c oxidoreductase (cytochrome b-c1 complex, complex III, CIII) and cytochrome c oxidase (complex IV, CIV), that cooperate to transfer electrons derived from NADH and succinate to molecular oxygen, creating an electrochemical gradient over the inner membrane that drives transmembrane transport and the ATP synthase. Cytochrome c oxidase is the component of the respiratory chain that catalyzes the reduction of oxygen to water. Electrons originating from reduced cytochrome c in the intermembrane space (IMS) are transferred via the dinuclear copper A center (CU(A)) of subunit 2 and heme A of subunit 1 to the active site in subunit 1, a binuclear center (BNC) formed by heme A3 and copper B (CU(B)). The BNC reduces molecular oxygen to 2 water molecules using 4 electrons from cytochrome c in the IMS and 4 protons from the mitochondrial matrix. In Brettanomyces naardenensis (Yeast), this protein is Cytochrome c oxidase subunit 2 (COX2).